The primary structure comprises 160 residues: SKP1-like protein 1A (160 aa).

The tract at residues 102-160 is interaction with the F-box domain of F-box proteins; that stretch reads ILAANYLNIKNLLDLTCQTVADMIKGKTPEEIRTTFNIKNDFTPEEEEEVRRENQWAFE.

This sequence belongs to the SKP1 family. Part of a SCF E3 ubiquitin ligase complex composed of SKP1, CUL1, RBX1 (RBX1A or RBX1B) and F-box proteins. Interacts with SKIP1, SKIP2, SKIP3, SKIP4, SKIP6, FIB1/SKIP7, SKIP8, PP2A11/SKIP10, SKIP11, PP2B11/SKIP12, PP2A14/SKIP13, SKIP14, SKIP15, SKIP16, SKIP19/FBL20, SKIP20, PP2B1/SKIP21, SKIP22, SKIP23, SKIP24, SKIP25, TULP10/SKIP26, SKIP27, SKIP28/MEE11, AFR/SKIP29, SKIP30, SKIP31, SKIP32/FBP7, SKIP33, SKIP35, ADO1/ZTL, ADO2/LKP2, ADO3/FKF1, AFR, COI1, DOR, EBF1, EBF2, EID1, ORE9, PP2A13/SKIP9, TIR1, UFO, SKP2A, CPR1/CPR30, FBL17, NUP58, At1g55000, At1g67340, At1g78100, At3g04660, At3g61590, At4g38940 and At5g49610. The SKP1A subunit of the SCF E3 ubiquitin ligase complex can interact directly with KIN10, KIN11 and the proteasome subunit PAD1. This interaction can be disrupted by PRL1. In case of polerovirus infection, part of a SCF P0 complex composed of the viral silencing suppressor P0, SKP1 and CUL1. Interacts with turnip yellows virus P0. Interacts with VBF and Agrobacterium virF. Binds to KIB1. As to expression, accumulates only in meristematic cells. Expressed in inflorescence, shoot and root apical meristems, as well as in developing organs such as gametocytes and seeds. Also detected in cortical layer and epidermis of roots, leaves, pith and vascular bundle of young stem, young floral buds and organ primordia, pollen and through the valve of siliques. Not detectable in mature root tissues.

The protein localises to the nucleus. It is found in the cytoplasm. It localises to the cytoskeleton. Its subcellular location is the spindle. The protein resides in the phragmoplast. It functions in the pathway protein modification; protein ubiquitination. Functionally, involved in ubiquitination and subsequent proteasomal degradation of target proteins. Together with CUL1, RBX1 and a F-box protein, it forms a SCF E3 ubiquitin ligase complex. The functional specificity of this complex depends on the type of F-box protein. In the SCF complex, it serves as an adapter that links the F-box protein to CUL1. SCF(UFO) is required for vegetative and floral organ development as well as for male gametogenesis. SCF(TIR1) is involved in auxin signaling pathway. SCF(COI1) regulates responses to jasmonates. SCF(EID1) and SCF(AFR) are implicated in phytochrome A light signaling. SCF(ADO1), SCF(ADO2), SCF(ADO3) are related to the circadian clock. SCF(ORE9) seems to be involved in senescence. SCF(EBF1/EBF2) may regulate ethylene signaling. Plays a role during embryogenesis and early postembryonic development, especially during cell elongation and division. Contributes to the correct chromosome segregation during tetrad formation. The polypeptide is SKP1-like protein 1A (Arabidopsis thaliana (Mouse-ear cress)).